Consider the following 201-residue polypeptide: 3-isopropylmalate dehydratase small subunit (201 aa).

Belongs to the LeuD family. LeuD type 1 subfamily. As to quaternary structure, heterodimer of LeuC and LeuD.

It catalyses the reaction (2R,3S)-3-isopropylmalate = (2S)-2-isopropylmalate. The protein operates within amino-acid biosynthesis; L-leucine biosynthesis; L-leucine from 3-methyl-2-oxobutanoate: step 2/4. In terms of biological role, catalyzes the isomerization between 2-isopropylmalate and 3-isopropylmalate, via the formation of 2-isopropylmaleate. In Cereibacter sphaeroides (strain ATCC 17029 / ATH 2.4.9) (Rhodobacter sphaeroides), this protein is 3-isopropylmalate dehydratase small subunit.